Reading from the N-terminus, the 325-residue chain is Glutarate 2-hydroxylase (325 aa).

Fe cation is bound by residues histidine 160, aspartate 162, and histidine 292.

It belongs to the glutarate hydroxylase family. Homotetramer. Fe(2+) serves as cofactor.

It catalyses the reaction glutarate + 2-oxoglutarate + O2 = (S)-2-hydroxyglutarate + succinate + CO2. It participates in amino-acid degradation. Its function is as follows. Acts as an alpha-ketoglutarate-dependent dioxygenase catalyzing hydroxylation of glutarate (GA) to L-2-hydroxyglutarate (L2HG). Functions in a L-lysine degradation pathway that proceeds via cadaverine, glutarate and L-2-hydroxyglutarate. The sequence is that of Glutarate 2-hydroxylase from Shigella boydii serotype 18 (strain CDC 3083-94 / BS512).